The chain runs to 955 residues: Centrosomal protein of 112 kDa (955 aa).

A coiled-coil region spans residues 277-954; sequence QKHDADVQKI…QEELTTYQGR (678 aa).

The protein localises to the cytoplasm. Its subcellular location is the cytoskeleton. It localises to the microtubule organizing center. It is found in the centrosome. This chain is Centrosomal protein of 112 kDa (CEP112), found in Homo sapiens (Human).